Reading from the N-terminus, the 108-residue chain is Tubulin-specific chaperone A (108 aa).

The residue at position 2 (A2) is an N-acetylalanine.

It belongs to the TBCA family. As to quaternary structure, supercomplex made of cofactors A to E. Cofactors A and D function by capturing and stabilizing tubulin in a quasi-native conformation. Cofactor E binds to the cofactor D-tubulin complex; interaction with cofactor C then causes the release of tubulin polypeptides that are committed to the native state. In terms of tissue distribution, widely expressed, but is most abundant in the testis.

Its subcellular location is the cytoplasm. The protein resides in the cytoskeleton. Its function is as follows. Tubulin-folding protein; involved in the early step of the tubulin folding pathway. The polypeptide is Tubulin-specific chaperone A (TBCA) (Bos taurus (Bovine)).